The following is a 159-amino-acid chain: Protein-export protein SecB (159 aa).

Belongs to the SecB family. In terms of assembly, homotetramer, a dimer of dimers. One homotetramer interacts with 1 SecA dimer.

The protein localises to the cytoplasm. Functionally, one of the proteins required for the normal export of preproteins out of the cell cytoplasm. It is a molecular chaperone that binds to a subset of precursor proteins, maintaining them in a translocation-competent state. It also specifically binds to its receptor SecA. The protein is Protein-export protein SecB of Burkholderia mallei (strain NCTC 10229).